Consider the following 461-residue polypeptide: Bifunctional protein GlmU (461 aa).

The tract at residues 1 to 230 (MECLMAVILA…SSEILGINDR (230 aa)) is pyrophosphorylase. Residues 9–12 (LAAG), Lys-23, Gln-73, 78–79 (GT), 101–103 (YGD), Gly-140, Glu-155, Asn-170, and Asn-228 contribute to the UDP-N-acetyl-alpha-D-glucosamine site. A Mg(2+)-binding site is contributed by Asp-103. Asn-228 is a Mg(2+) binding site. A linker region spans residues 231–251 (VQLAEAGRIIRSRILKRHMKN). An N-acetyltransferase region spans residues 252–461 (GVTIIDPDST…KKGMLRQEKE (210 aa)). Positions 333 and 351 each coordinate UDP-N-acetyl-alpha-D-glucosamine. Catalysis depends on His-363, which acts as the Proton acceptor. UDP-N-acetyl-alpha-D-glucosamine-binding residues include Tyr-366 and Asn-377. Residues 386 to 387 (NY), Ala-423, and Arg-440 contribute to the acetyl-CoA site.

It in the N-terminal section; belongs to the N-acetylglucosamine-1-phosphate uridyltransferase family. This sequence in the C-terminal section; belongs to the transferase hexapeptide repeat family. As to quaternary structure, homotrimer. Mg(2+) is required as a cofactor.

It is found in the cytoplasm. The enzyme catalyses alpha-D-glucosamine 1-phosphate + acetyl-CoA = N-acetyl-alpha-D-glucosamine 1-phosphate + CoA + H(+). It carries out the reaction N-acetyl-alpha-D-glucosamine 1-phosphate + UTP + H(+) = UDP-N-acetyl-alpha-D-glucosamine + diphosphate. It participates in nucleotide-sugar biosynthesis; UDP-N-acetyl-alpha-D-glucosamine biosynthesis; N-acetyl-alpha-D-glucosamine 1-phosphate from alpha-D-glucosamine 6-phosphate (route II): step 2/2. It functions in the pathway nucleotide-sugar biosynthesis; UDP-N-acetyl-alpha-D-glucosamine biosynthesis; UDP-N-acetyl-alpha-D-glucosamine from N-acetyl-alpha-D-glucosamine 1-phosphate: step 1/1. The protein operates within bacterial outer membrane biogenesis; LPS lipid A biosynthesis. Functionally, catalyzes the last two sequential reactions in the de novo biosynthetic pathway for UDP-N-acetylglucosamine (UDP-GlcNAc). The C-terminal domain catalyzes the transfer of acetyl group from acetyl coenzyme A to glucosamine-1-phosphate (GlcN-1-P) to produce N-acetylglucosamine-1-phosphate (GlcNAc-1-P), which is converted into UDP-GlcNAc by the transfer of uridine 5-monophosphate (from uridine 5-triphosphate), a reaction catalyzed by the N-terminal domain. The polypeptide is Bifunctional protein GlmU (Acetivibrio thermocellus (strain ATCC 27405 / DSM 1237 / JCM 9322 / NBRC 103400 / NCIMB 10682 / NRRL B-4536 / VPI 7372) (Clostridium thermocellum)).